A 260-amino-acid chain; its full sequence is tRNA pseudouridine synthase A (260 aa).

Aspartate 52 (nucleophile) is an active-site residue. Tyrosine 110 contacts substrate.

The protein belongs to the tRNA pseudouridine synthase TruA family. In terms of assembly, homodimer.

It carries out the reaction uridine(38/39/40) in tRNA = pseudouridine(38/39/40) in tRNA. In terms of biological role, formation of pseudouridine at positions 38, 39 and 40 in the anticodon stem and loop of transfer RNAs. The polypeptide is tRNA pseudouridine synthase A (Thiobacillus denitrificans (strain ATCC 25259 / T1)).